Consider the following 532-residue polypeptide: IQ domain-containing protein IQM4 (532 aa).

Disordered regions lie at residues 47–67 and 85–104; these read SRTN…TGME and PMNK…RNSL. Over residues 56 to 66 the composition is skewed to basic and acidic residues; sequence NPQEKSPKTGM. Positions 85-94 are enriched in acidic residues; sequence PMNKEDEEIV. In terms of domain architecture, IQ spans 136 to 165; sequence LDAAATTLQKVYKSYRTRRNLADCAVVVEE. Disordered regions lie at residues 410-443 and 487-513; these read SSGY…KERE and PRIS…PRVR. Over residues 487–496 the composition is skewed to polar residues; the sequence is PRISPGSTRF. Positions 499 to 509 are enriched in pro residues; it reads PYGPIPSPRPS.

Expressed in roots, cauline leaves and flowers, and at lower levels in rosette leaves, stems and siliques.

It localises to the cytoplasm. The protein resides in the nucleus. Functionally, may be involved in biotic and abiotic stress responses. This chain is IQ domain-containing protein IQM4, found in Arabidopsis thaliana (Mouse-ear cress).